We begin with the raw amino-acid sequence, 1406 residues long: DNA-directed RNA polymerase subunit beta' (1406 aa).

C70, C72, C85, and C88 together coordinate Zn(2+). Mg(2+)-binding residues include D460, D462, and D464. Zn(2+) is bound by residues C814, C888, C895, and C898.

Belongs to the RNA polymerase beta' chain family. As to quaternary structure, the RNAP catalytic core consists of 2 alpha, 1 beta, 1 beta' and 1 omega subunit. When a sigma factor is associated with the core the holoenzyme is formed, which can initiate transcription. Mg(2+) is required as a cofactor. It depends on Zn(2+) as a cofactor.

It catalyses the reaction RNA(n) + a ribonucleoside 5'-triphosphate = RNA(n+1) + diphosphate. Its function is as follows. DNA-dependent RNA polymerase catalyzes the transcription of DNA into RNA using the four ribonucleoside triphosphates as substrates. In Photorhabdus laumondii subsp. laumondii (strain DSM 15139 / CIP 105565 / TT01) (Photorhabdus luminescens subsp. laumondii), this protein is DNA-directed RNA polymerase subunit beta'.